A 193-amino-acid chain; its full sequence is Putative manganese efflux pump MntP (193 aa).

6 helical membrane passes run Leu-3 to Gly-23, Val-39 to Leu-59, Ile-65 to Val-85, Leu-113 to Val-133, Ile-138 to Leu-158, and Val-173 to Ala-193.

This sequence belongs to the MntP (TC 9.B.29) family.

The protein resides in the cell inner membrane. In terms of biological role, probably functions as a manganese efflux pump. The protein is Putative manganese efflux pump MntP of Rhodospirillum rubrum (strain ATCC 11170 / ATH 1.1.1 / DSM 467 / LMG 4362 / NCIMB 8255 / S1).